The following is a 79-amino-acid chain: CDC42 small effector protein 1 (79 aa).

Residues C10 and C11 are each lipidated (S-palmitoyl cysteine). The CRIB domain occupies 30–43; it reads IGEPMNFVHLTHIG. Positions 48 to 79 are disordered; it reads GAGDGLAMTGAVQEQMRSKGNRDRPWSNSRGL. Over residues 63-72 the composition is skewed to basic and acidic residues; the sequence is MRSKGNRDRP.

The protein belongs to the CDC42SE/SPEC family. In terms of assembly, interacts with CDC42 (in GTP-bound form). Interacts weakly with RAC1 and not at all with RHOA.

It is found in the cytoplasm. The protein localises to the cytoskeleton. Its subcellular location is the cell membrane. In terms of biological role, probably involved in the organization of the actin cytoskeleton by acting downstream of CDC42, inducing actin filament assembly. Alters CDC42-induced cell shape changes. In activated T-cells, may play a role in CDC42-mediated F-actin accumulation at the immunological synapse. May play a role in early contractile events in phagocytosis in macrophages. The protein is CDC42 small effector protein 1 (CDC42SE1) of Bos taurus (Bovine).